Here is a 108-residue protein sequence, read N- to C-terminus: MGVEIETISPGDGRTFPKKGQTCVVHYTGMLQNGKKFDSSRDRNKPFKFRIGKQEVIKGFEEGAAQMSLGQRAKLTCTPDVAYGATGHPGVIPPNATLIFDVELLNLE.

A PPIase FKBP-type domain is found at 20 to 108 (GQTCVVHYTG…IFDVELLNLE (89 aa)).

In terms of assembly, identified in a complex composed of RYR2, FKBP1B, PKA catalytic subunit, PRKAR2A, AKAP6, and the protein phosphatases PP2A and PP1. Interacts directly with RYR2.

It localises to the cytoplasm. It is found in the sarcoplasmic reticulum. It catalyses the reaction [protein]-peptidylproline (omega=180) = [protein]-peptidylproline (omega=0). With respect to regulation, inhibited by both FK506 and rapamycin. Has the potential to contribute to the immunosuppressive and toxic effects of FK506 and rapamycin. PPIases accelerate the folding of proteins. It catalyzes the cis-trans isomerization of proline imidic peptide bonds in oligopeptides. This chain is Peptidyl-prolyl cis-trans isomerase FKBP1B (FKBP1B), found in Bos taurus (Bovine).